Here is a 354-residue protein sequence, read N- to C-terminus: Serum paraoxonase/lactonase 3 (354 aa).

A disulfide bridge connects residues cysteine 42 and cysteine 352. Residue asparagine 50 is glycosylated (N-linked (GlcNAc...) asparagine). Ca(2+) is bound by residues glutamate 53 and aspartate 54. Histidine 114 acts as the Proton acceptor in catalysis. Residue isoleucine 116 participates in Ca(2+) binding. A Phosphoserine modification is found at serine 165. Residues asparagine 167, aspartate 168, asparagine 223, aspartate 268, and asparagine 269 each contribute to the Ca(2+) site. Residues asparagine 269 and asparagine 323 are each glycosylated (N-linked (GlcNAc...) asparagine).

It belongs to the paraoxonase family. Homodimer. Requires Ca(2+) as cofactor. In terms of processing, glycosylated. Post-translationally, the signal sequence is not cleaved.

It is found in the secreted. The protein localises to the extracellular space. It carries out the reaction a phenyl acetate + H2O = a phenol + acetate + H(+). The enzyme catalyses An aryl dialkyl phosphate + H2O = dialkyl phosphate + an aryl alcohol.. The catalysed reaction is an N-acyl-L-homoserine lactone + H2O = an N-acyl-L-homoserine + H(+). In terms of biological role, has low activity towards the organophosphate paraxon and aromatic carboxylic acid esters. Rapidly hydrolyzes lactones such as statin prodrugs (e.g. lovastatin). Hydrolyzes aromatic lactones and 5- or 6-member ring lactones with aliphatic substituents but not simple lactones or those with polar substituents. This Mus musculus (Mouse) protein is Serum paraoxonase/lactonase 3 (Pon3).